Consider the following 372-residue polypeptide: GTPase Obg (372 aa).

The Obg domain occupies 1 to 159 (MKFIDEARIE…RMLKLELKVL (159 aa)). A disordered region spans residues 128 to 147 (LHFKSSTNRAPRQKTDGKPG). The OBG-type G domain maps to 160 to 334 (ADVGLLGMPN…LVYAIYDYLA (175 aa)). GTP is bound by residues 166-173 (GMPNAGKS), 191-195 (FTTLA), 213-216 (DIPG), 284-287 (NKLD), and 315-317 (SAL). Mg(2+) contacts are provided by serine 173 and threonine 193.

This sequence belongs to the TRAFAC class OBG-HflX-like GTPase superfamily. OBG GTPase family. In terms of assembly, monomer. Requires Mg(2+) as cofactor.

The protein resides in the cytoplasm. In terms of biological role, an essential GTPase which binds GTP, GDP and possibly (p)ppGpp with moderate affinity, with high nucleotide exchange rates and a fairly low GTP hydrolysis rate. Plays a role in control of the cell cycle, stress response, ribosome biogenesis and in those bacteria that undergo differentiation, in morphogenesis control. This chain is GTPase Obg, found in Burkholderia thailandensis (strain ATCC 700388 / DSM 13276 / CCUG 48851 / CIP 106301 / E264).